Reading from the N-terminus, the 487-residue chain is Galactose-1-phosphate uridylyltransferase (487 aa).

The protein belongs to the galactose-1-phosphate uridylyltransferase type 2 family.

The protein localises to the cytoplasm. It catalyses the reaction alpha-D-galactose 1-phosphate + UDP-alpha-D-glucose = alpha-D-glucose 1-phosphate + UDP-alpha-D-galactose. Its pathway is carbohydrate metabolism; galactose metabolism. The protein is Galactose-1-phosphate uridylyltransferase of Lactiplantibacillus plantarum (strain ATCC BAA-793 / NCIMB 8826 / WCFS1) (Lactobacillus plantarum).